We begin with the raw amino-acid sequence, 303 residues long: Caspase-7 (303 aa).

N-acetylmethionine is present on M1. The propeptide occupies 1 to 23 (MTDDQDCAAELEKVDSSSEDGVD). Residues 1–26 (MTDDQDCAAELEKVDSSSEDGVDAKP) are disordered. The span at 10–26 (ELEKVDSSSEDGVDAKP) shows a compositional bias: basic and acidic residues. A Phosphoserine modification is found at S30. The tract at residues 38–41 (KKKR) is exosite. Residues 76 to 87 (KNFDKATGMDVR) are loop L1. Residue H144 is part of the active site. T173 carries the post-translational modification Phosphothreonine. Residue C186 is part of the active site. The segment at 187 to 196 (RGTELDDGIQ) is loop L2. Positions 199–206 (SGPINDID) are excised as a propeptide. Positions 226–238 (VPGYYSWRNPGKG) are loop L3. Residue S239 is modified to Phosphoserine. Residues 274–288 (ESQSDDPRFNEKKQI) are loop L4.

This sequence belongs to the peptidase C14A family. Heterotetramer that consists of two anti-parallel arranged heterodimers, each one formed by a 20 kDa (p20) and a 11 kDa (p11) subunit. Interacts with XIAP (via its second BIR domain); inhibiting CASP7 activity. Interacts with BIRC6/bruce. Interacts with ATXN3 (short isoform 1). Interacts with HSPA5. Cleavage by different proteases, such as granzyme B (GZMB), caspase-1 (CASP1), caspase-8 (CASP8) or caspase-9 (CASP9) generate the two active subunits. Its involvement in different programmed cell death processes is probably specified by the protease that activates CASP7. Cleaved and activated by initiator caspases (CASP8 and/or CASP9), leading to execution phase of apoptosis. Cleavage and maturation by GZMB regulates granzyme-mediated programmed cell death. Cleaved and activated by CASP1 in response to bacterial infection. Propeptide domains can also be cleaved efficiently by CASP3. Active heterodimers between the small subunit of caspase-7 and the large subunit of CASP3, and vice versa, also occur. Also cleaved at the N-terminus at alternative sites by CAPN1, leading to its activation. In terms of processing, phosphorylation at Ser-30 and Ser-239 by PAK2 inhibits its activity. Phosphorylation at Ser-30 prevents cleavage and activation by initiator caspase CASP9, while phosphorylation at Ser-239 prevents thiol protease activity by preventing substrate-binding. Post-translationally, ubiquitinated by BIRC6; this activity is inhibited by DIABLO/SMAC. As to expression, highly expressed in heart, lung, liver and kidney. Low levels in spleen, skeletal muscle and testis. No expression in the brain.

Its subcellular location is the cytoplasm. The protein localises to the cytosol. It is found in the nucleus. The protein resides in the secreted. It localises to the extracellular space. It catalyses the reaction Strict requirement for an Asp residue at position P1 and has a preferred cleavage sequence of Asp-Glu-Val-Asp-|-.. With respect to regulation, during activation, the N-terminal disordered prodomain is removed by cleavage. Concomitantly, double cleavage gives rise to a large Caspase-7 subunit p20 and a small Caspase-7 subunit p11. The two large and two small subunits then assemble to form the active CASP7 complex. Can be cleaved and activated by different caspases, depending on the context. Cleaved and activated by initiator caspases (CASP8 and/or CASP9), leading to execution phase of apoptosis. Cleavage and maturation by GZMB regulates granzyme-mediated programmed cell death. Cleavage and maturation by CASP1 regulates pyroptosis. Inhibited by XIAP, which directly binds to the active site pocket and obstructs substrate entry. Phosphorylation at Ser-30 and Ser-239 by PAK2 inhibits its activity. Inhibited by BIRC6; following inhibition of BIRC6-caspase binding by DIABLO/SMAC, BIRC6 is subjected to caspase cleavage, leading to an increase in active caspases. In terms of biological role, thiol protease involved in different programmed cell death processes, such as apoptosis, pyroptosis or granzyme-mediated programmed cell death, by proteolytically cleaving target proteins. Has a marked preference for Asp-Glu-Val-Asp (DEVD) consensus sequences, with some plasticity for alternate non-canonical sequences. Its involvement in the different programmed cell death processes is probably determined by upstream proteases that activate CASP7. Acts as an effector caspase involved in the execution phase of apoptosis: following cleavage and activation by initiator caspases (CASP8 and/or CASP9), mediates execution of apoptosis by catalyzing cleavage of proteins, such as CLSPN, PARP1, PTGES3 and YY1. Compared to CASP3, acts as a minor executioner caspase and cleaves a limited set of target proteins. Acts as a key regulator of the inflammatory response in response to bacterial infection by catalyzing cleavage and activation of the sphingomyelin phosphodiesterase SMPD1 in the extracellular milieu, thereby promoting membrane repair. Regulates pyroptosis in intestinal epithelial cells: cleaved and activated by CASP1 in response to S.typhimurium infection, promoting its secretion to the extracellular milieu, where it catalyzes activation of SMPD1, generating ceramides that repair membranes and counteract the action of gasdermin-D (GSDMD) pores. Regulates granzyme-mediated programmed cell death in hepatocytes: cleaved and activated by granzyme B (GZMB) in response to bacterial infection, promoting its secretion to the extracellular milieu, where it catalyzes activation of SMPD1, generating ceramides that repair membranes and counteract the action of perforin (PRF1) pores. Following cleavage by CASP1 in response to inflammasome activation, catalyzes processing and inactivation of PARP1, alleviating the transcription repressor activity of PARP1. Acts as an inhibitor of type I interferon production during virus-induced apoptosis by mediating cleavage of antiviral proteins CGAS, IRF3 and MAVS, thereby preventing cytokine overproduction. Cleaves and activates sterol regulatory element binding proteins (SREBPs). Cleaves phospholipid scramblase proteins XKR4, XKR8 and XKR9. Cleaves BIRC6 following inhibition of BIRC6-caspase binding by DIABLO/SMAC. The chain is Caspase-7 from Mus musculus (Mouse).